The following is a 34-amino-acid chain: Protein HRURF (34 aa).

In terms of biological role, may function as an inhibitory translational control element that can negatively regulate protein translation of HR gene. The polypeptide is Protein HRURF (Homo sapiens (Human)).